A 369-amino-acid polypeptide reads, in one-letter code: Glutamate 5-kinase (369 aa).

K9 provides a ligand contact to ATP. Substrate-binding residues include S49, D136, and N148. ATP-binding positions include 168 to 169 (TD) and 210 to 216 (TGGMLTK). One can recognise a PUA domain in the interval 275–355 (QGEIYVDQGA…KGVVIHRDDW (81 aa)).

This sequence belongs to the glutamate 5-kinase family.

It localises to the cytoplasm. The catalysed reaction is L-glutamate + ATP = L-glutamyl 5-phosphate + ADP. The protein operates within amino-acid biosynthesis; L-proline biosynthesis; L-glutamate 5-semialdehyde from L-glutamate: step 1/2. Functionally, catalyzes the transfer of a phosphate group to glutamate to form L-glutamate 5-phosphate. The polypeptide is Glutamate 5-kinase (Streptococcus gordonii (strain Challis / ATCC 35105 / BCRC 15272 / CH1 / DL1 / V288)).